Consider the following 295-residue polypeptide: Phosphatidylserine decarboxylase proenzyme (295 aa).

Catalysis depends on charge relay system; for autoendoproteolytic cleavage activity residues Asp-90, His-147, and Ser-254. The active-site Schiff-base intermediate with substrate; via pyruvic acid; for decarboxylase activity is Ser-254. Ser-254 bears the Pyruvic acid (Ser); by autocatalysis mark.

This sequence belongs to the phosphatidylserine decarboxylase family. PSD-B subfamily. Prokaryotic type I sub-subfamily. In terms of assembly, heterodimer of a large membrane-associated beta subunit and a small pyruvoyl-containing alpha subunit. Pyruvate serves as cofactor. Is synthesized initially as an inactive proenzyme. Formation of the active enzyme involves a self-maturation process in which the active site pyruvoyl group is generated from an internal serine residue via an autocatalytic post-translational modification. Two non-identical subunits are generated from the proenzyme in this reaction, and the pyruvate is formed at the N-terminus of the alpha chain, which is derived from the carboxyl end of the proenzyme. The autoendoproteolytic cleavage occurs by a canonical serine protease mechanism, in which the side chain hydroxyl group of the serine supplies its oxygen atom to form the C-terminus of the beta chain, while the remainder of the serine residue undergoes an oxidative deamination to produce ammonia and the pyruvoyl prosthetic group on the alpha chain. During this reaction, the Ser that is part of the protease active site of the proenzyme becomes the pyruvoyl prosthetic group, which constitutes an essential element of the active site of the mature decarboxylase.

It is found in the cell membrane. The catalysed reaction is a 1,2-diacyl-sn-glycero-3-phospho-L-serine + H(+) = a 1,2-diacyl-sn-glycero-3-phosphoethanolamine + CO2. It participates in phospholipid metabolism; phosphatidylethanolamine biosynthesis; phosphatidylethanolamine from CDP-diacylglycerol: step 2/2. In terms of biological role, catalyzes the formation of phosphatidylethanolamine (PtdEtn) from phosphatidylserine (PtdSer). In Sodalis glossinidius (strain morsitans), this protein is Phosphatidylserine decarboxylase proenzyme.